We begin with the raw amino-acid sequence, 175 residues long: ATP synthase subunit delta (175 aa).

The protein belongs to the ATPase delta chain family. In terms of assembly, F-type ATPases have 2 components, F(1) - the catalytic core - and F(0) - the membrane proton channel. F(1) has five subunits: alpha(3), beta(3), gamma(1), delta(1), epsilon(1). F(0) has three main subunits: a(1), b(2) and c(10-14). The alpha and beta chains form an alternating ring which encloses part of the gamma chain. F(1) is attached to F(0) by a central stalk formed by the gamma and epsilon chains, while a peripheral stalk is formed by the delta and b chains.

Its subcellular location is the cell inner membrane. Functionally, f(1)F(0) ATP synthase produces ATP from ADP in the presence of a proton or sodium gradient. F-type ATPases consist of two structural domains, F(1) containing the extramembraneous catalytic core and F(0) containing the membrane proton channel, linked together by a central stalk and a peripheral stalk. During catalysis, ATP synthesis in the catalytic domain of F(1) is coupled via a rotary mechanism of the central stalk subunits to proton translocation. In terms of biological role, this protein is part of the stalk that links CF(0) to CF(1). It either transmits conformational changes from CF(0) to CF(1) or is implicated in proton conduction. The polypeptide is ATP synthase subunit delta (Sulfurovum sp. (strain NBC37-1)).